The sequence spans 355 residues: MVGATAKDKAGSVENAISQIQKQFGKGSIMRLGEQALEAIPVISTGALSLDIALGVGGLPKGRMTEIYGPESSGKTTLALHVVAEAQKLGGIAAFIDAEHALDTAYAEKLGVNIDNLLVSQPDFGEQALEIAEILIRSGGVDIIVVDSVAALTPKAEIDGNVGDVHVGLQARLMSQAMRKFAGVLNRSNTVLIFINQIRMKIGVMFGSPETTTGGNALKFYCSERLDIRRIGAIKDGQEITGNRTRVKVVKNKVAPPFKIAEFDIIYGEGISKIGDMFDLAVGLDIIDKSGSWYSYKNERIGQGRENSKQFLMDTPAICHEIEEKVRSAYGLPDREETKREETAQIPDTEKTKDV.

69–76 contacts ATP; the sequence is GPESSGKT. Residues 329 to 355 are disordered; it reads AYGLPDREETKREETAQIPDTEKTKDV.

The protein belongs to the RecA family.

The protein resides in the cytoplasm. Its function is as follows. Can catalyze the hydrolysis of ATP in the presence of single-stranded DNA, the ATP-dependent uptake of single-stranded DNA by duplex DNA, and the ATP-dependent hybridization of homologous single-stranded DNAs. It interacts with LexA causing its activation and leading to its autocatalytic cleavage. This chain is Protein RecA, found in Desulfotalea psychrophila (strain LSv54 / DSM 12343).